A 374-amino-acid chain; its full sequence is Eukaryotic translation initiation factor 3 subunit M (374 aa).

Residues 180–339 (TAAKVMVELL…RKVVVSHSTH (160 aa)) enclose the PCI domain.

Belongs to the eIF-3 subunit M family. Component of the eukaryotic translation initiation factor 3 (eIF-3) complex, which is composed of 13 subunits: EIF3A, EIF3B, EIF3C, EIF3D, EIF3E, EIF3F, EIF3G, EIF3H, EIF3I, EIF3J, EIF3K, EIF3L and EIF3M.

Its subcellular location is the cytoplasm. Component of the eukaryotic translation initiation factor 3 (eIF-3) complex, which is involved in protein synthesis of a specialized repertoire of mRNAs and, together with other initiation factors, stimulates binding of mRNA and methionyl-tRNAi to the 40S ribosome. The eIF-3 complex specifically targets and initiates translation of a subset of mRNAs involved in cell proliferation. This is Eukaryotic translation initiation factor 3 subunit M from Gallus gallus (Chicken).